We begin with the raw amino-acid sequence, 270 residues long: tRNA pseudouridine synthase A (270 aa).

The active-site Nucleophile is the aspartate 52. Tyrosine 110 contacts substrate.

Belongs to the tRNA pseudouridine synthase TruA family. In terms of assembly, homodimer.

The catalysed reaction is uridine(38/39/40) in tRNA = pseudouridine(38/39/40) in tRNA. Formation of pseudouridine at positions 38, 39 and 40 in the anticodon stem and loop of transfer RNAs. The protein is tRNA pseudouridine synthase A of Paraburkholderia phytofirmans (strain DSM 17436 / LMG 22146 / PsJN) (Burkholderia phytofirmans).